Consider the following 104-residue polypeptide: Intracellular chorismate mutase (104 aa).

One can recognise a Chorismate mutase domain in the interval 23 to 104; sequence AVPEIDDLRR…LRLGRGRLGY (82 aa). 3 residues coordinate chorismate: Arg59, Val68, and Glu72.

As to quaternary structure, homodimer. Probably interacts with AroG (MSMEG_4244).

It localises to the cytoplasm. It carries out the reaction chorismate = prephenate. Its pathway is metabolic intermediate biosynthesis; prephenate biosynthesis; prephenate from chorismate: step 1/1. Its activity is regulated as follows. The formation of the complex with AroG activates the chorismate mutase activity. Functionally, catalyzes the Claisen rearrangement of chorismate to prephenate. Probably involved in the aromatic amino acid biosynthesis. The chain is Intracellular chorismate mutase from Mycolicibacterium smegmatis (strain ATCC 700084 / mc(2)155) (Mycobacterium smegmatis).